The primary structure comprises 418 residues: Actin-related protein 3 (418 aa).

At Ala2 the chain carries N-acetylalanine. Residues Lys240, Lys244, Lys251, and Lys254 each carry the N6-acetyllysine modification.

Belongs to the actin family. ARP3 subfamily. Component of the Arp2/3 complex composed of ACTR2/ARP2, ACTR3/ARP3, ARPC1B/p41-ARC, ARPC2/p34-ARC, ARPC3/p21-ARC, ARPC4/p20-ARC and ARPC5/p16-ARC. Interacts with WHDC1. Interacts weakly with MEFV. Interacts with AVIL.

Its subcellular location is the cytoplasm. It localises to the cytoskeleton. The protein resides in the cell projection. It is found in the nucleus. ATP-binding component of the Arp2/3 complex, a multiprotein complex that mediates actin polymerization upon stimulation by nucleation-promoting factor (NPF). The Arp2/3 complex mediates the formation of branched actin networks in the cytoplasm, providing the force for cell motility. Seems to contact the pointed end of the daughter actin filament. In podocytes, required for the formation of lamellipodia downstream of AVIL and PLCE1 regulation. In addition to its role in the cytoplasmic cytoskeleton, the Arp2/3 complex also promotes actin polymerization in the nucleus, thereby regulating gene transcription and repair of damaged DNA. The Arp2/3 complex promotes homologous recombination (HR) repair in response to DNA damage by promoting nuclear actin polymerization, leading to drive motility of double-strand breaks (DSBs). Plays a role in ciliogenesis. The sequence is that of Actin-related protein 3 (ACTR3) from Bos taurus (Bovine).